A 203-amino-acid polypeptide reads, in one-letter code: Cardiotrophin-1 (203 aa).

This sequence belongs to the IL-6 superfamily. In terms of tissue distribution, highly expressed in heart, skeletal muscle, liver, lung and kidney. Lower levels in testis and brain. No expression in spleen.

It localises to the secreted. Its function is as follows. Induces cardiac myocyte hypertrophy in vitro. Binds to and activates the ILST/gp130 receptor. The sequence is that of Cardiotrophin-1 (Ctf1) from Mus musculus (Mouse).